A 146-amino-acid chain; its full sequence is Hemoglobin subunit beta-2 (146 aa).

The Globin domain maps to histidine 2–histidine 146. 2 residues coordinate heme b: histidine 63 and histidine 92.

The protein belongs to the globin family. In terms of assembly, heterotetramer of two alpha chains and two beta chains. Red blood cells.

In terms of biological role, involved in oxygen transport from the lung to the various peripheral tissues. The polypeptide is Hemoglobin subunit beta-2 (Iguana iguana (Common iguana)).